The chain runs to 515 residues: Probable coatomer subunit delta (515 aa).

The span at 161 to 180 (AKQAMAEKAKELKRAQKEAL) shows a compositional bias: basic and acidic residues. Positions 161 to 231 (AKQAMAEKAK…GGKALKLGGK (71 aa)) are disordered. Residues 187–198 (SYQSSTGISSSS) are compositionally biased toward low complexity. The MHD domain occupies 276–515 (REVVHVRTEE…TFNSENFEIV (240 aa)).

The protein belongs to the adaptor complexes medium subunit family. Delta-COP subfamily. Oligomeric complex that consists of at least the alpha, beta, beta', gamma, delta, epsilon and zeta subunits.

It localises to the cytoplasm. It is found in the golgi apparatus membrane. The protein localises to the cytoplasmic vesicle. Its subcellular location is the COPI-coated vesicle membrane. In terms of biological role, the coatomer is a cytosolic protein complex that binds to dilysine motifs and reversibly associates with Golgi non-clathrin-coated vesicles, which further mediate biosynthetic protein transport from the ER, via the Golgi up to the trans Golgi network. Coatomer complex is required for budding from Golgi membranes, and is essential for the retrograde Golgi-to-ER transport of dilysine-tagged proteins. The polypeptide is Probable coatomer subunit delta (Caenorhabditis elegans).